The sequence spans 620 residues: Tyrosine-protein kinase ITK/TSK (620 aa).

The region spanning 4–111 is the PH domain; sequence FILLEEQLIK…WVLALKEETR (108 aa). The segment at 113 to 149 adopts a Btk-type zinc-finger fold; it reads NNSLVPKYHPNFWMDGKWRCCSQLEKLATGCAQYDPT. Zn(2+) is bound by residues His-121, Cys-132, Cys-133, and Cys-143. Positions 171-231 constitute an SH3 domain; the sequence is PEETVVIALY…PSSYLVEKSP (61 aa). At Tyr-180 the chain carries Phosphotyrosine; by autocatalysis. Residues 239 to 338 form the SH2 domain; the sequence is WYNKSISRDK…GLVTRLRYPV (100 aa). The Protein kinase domain occupies 363–615; sequence LTFVQEIGSG…SRLLRQLAEI (253 aa). ATP contacts are provided by residues 369 to 377 and Lys-391; that span reads IGSGQFGLV. The Proton acceptor role is filled by Asp-482. Position 512 is a phosphotyrosine; by LCK (Tyr-512). At Ser-565 the chain carries Phosphoserine.

This sequence belongs to the protein kinase superfamily. Tyr protein kinase family. TEC subfamily. As to quaternary structure, homooligomerizes; this association negatively regulates kinase activity. Interacts with PPIA/CYPA; this interaction regulates TCR signal strength via a proline-directed conformational switch in ITK. Interacts with THEMIS. Interacts with FASLG. Interacts with VAV1; this interaction is important for VAV1 localization and TCR-induced actin polarization. Interacts with TBX21. Zn(2+) is required as a cofactor. Phosphorylated at Tyr-512 in the activation loop of the kinase domain by LCK. Subsequent autophosphorylation at Tyr-180 leads to the kinase activation. The autophosphorylated Tyr-180 lies within the substrate binding sequence of the SH3 domain. In terms of processing, ubiquitinated. As to expression, T-cell lines and natural killer cell lines.

The protein localises to the cytoplasm. It localises to the nucleus. The catalysed reaction is L-tyrosyl-[protein] + ATP = O-phospho-L-tyrosyl-[protein] + ADP + H(+). Tyrosine kinase that plays an essential role in regulation of the adaptive immune response. Regulates the development, function and differentiation of conventional T-cells and nonconventional NKT-cells. When antigen presenting cells (APC) activate T-cell receptor (TCR), a series of phosphorylation lead to the recruitment of ITK to the cell membrane, in the vicinity of the stimulated TCR receptor, where it is phosphorylated by LCK. Phosphorylation leads to ITK autophosphorylation and full activation. Once activated, phosphorylates PLCG1, leading to the activation of this lipase and subsequent cleavage of its substrates. In turn, the endoplasmic reticulum releases calcium in the cytoplasm and the nuclear activator of activated T-cells (NFAT) translocates into the nucleus to perform its transcriptional duty. Phosphorylates 2 essential adapter proteins: the linker for activation of T-cells/LAT protein and LCP2. Then, a large number of signaling molecules such as VAV1 are recruited and ultimately lead to lymphokine production, T-cell proliferation and differentiation. Required for TCR-mediated calcium response in gamma-delta T-cells, may also be involved in the modulation of the transcriptomic signature in the Vgamma2-positive subset of immature gamma-delta T-cells. Phosphorylates TBX21 at 'Tyr-530' and mediates its interaction with GATA3. The polypeptide is Tyrosine-protein kinase ITK/TSK (ITK) (Homo sapiens (Human)).